A 353-amino-acid chain; its full sequence is Rhodopsin (353 aa).

Residues 1 to 36 (MNGTEGPFFYVPMVNTTGIVRSPYEYPQYYLVNPAA) lie on the Extracellular side of the membrane. Asparagine 2 and asparagine 15 each carry an N-linked (GlcNAc...) asparagine glycan. The chain crosses the membrane as a helical span at residues 37–61 (YAALGAYMFLLILVGFPINFLTLYV). Over 62–73 (TIEHKKLRTPLN) the chain is Cytoplasmic. A helical transmembrane segment spans residues 74-96 (YILLNLAVADLFMVLGGFTTTMY). At 97-110 (TSMHGYFVLGRLGC) the chain is on the extracellular side. Cysteine 110 and cysteine 187 are oxidised to a cystine. The chain crosses the membrane as a helical span at residues 111 to 133 (NIEGFFATLGGEIALWSLVVLAI). Residues 134–136 (ERW) carry the 'Ionic lock' involved in activated form stabilization motif. Topologically, residues 134-152 (ERWVVVCKPISNFRFGENH) are cytoplasmic. A helical transmembrane segment spans residues 153–173 (AIMGLAFTWTMAMACAAPPLV). Residues 174–202 (GWSRYIPEGMQCSCGIDYYTRAEGFNNES) lie on the Extracellular side of the membrane. Asparagine 200 carries N-linked (GlcNAc...) asparagine glycosylation. A helical membrane pass occupies residues 203 to 224 (FVIYMFICHFTIPLTVVFFCYG). Residues 225–252 (RLLCAVKEAAAAQQESETTQRAEKEVTR) are Cytoplasmic-facing. A helical transmembrane segment spans residues 253–274 (MVIMMVIAFLVCWLPYASVAWY). The Extracellular segment spans residues 275-286 (IFTHQGSEFGPV). The helical transmembrane segment at 287–308 (FMTIPAFFAKSSSIYNPMIYIC) threads the bilayer. Lysine 296 is subject to N6-(retinylidene)lysine. The Cytoplasmic segment spans residues 309–353 (LNKQFRHCMITTLCCGKNPFEEEEGASTASKTEASSVSSSSVSPA). S-palmitoyl cysteine attachment occurs at residues cysteine 322 and cysteine 323. Residues 331-353 (EEGASTASKTEASSVSSSSVSPA) form a disordered region. Residues 334 to 353 (ASTASKTEASSVSSSSVSPA) show a composition bias toward low complexity.

It belongs to the G-protein coupled receptor 1 family. Opsin subfamily. In terms of processing, phosphorylated on some or all of the serine and threonine residues present in the C-terminal region. Contains one covalently linked retinal chromophore.

It localises to the membrane. The protein localises to the cell projection. Its subcellular location is the cilium. It is found in the photoreceptor outer segment. In terms of biological role, photoreceptor required for image-forming vision at low light intensity. While most salt water fish species use retinal as chromophore, most freshwater fish use 3-dehydroretinal, or a mixture of retinal and 3-dehydroretinal. Light-induced isomerization of 11-cis to all-trans retinal triggers a conformational change that activates signaling via G-proteins. Subsequent receptor phosphorylation mediates displacement of the bound G-protein alpha subunit by arrestin and terminates signaling. This chain is Rhodopsin (rho), found in Diplodus annularis (Annular seabream).